The primary structure comprises 186 residues: Large ribosomal subunit protein bL17 (186 aa).

Residues 123–186 (SEADRARRVK…ADEAEGSSED (64 aa)) are disordered. A compositionally biased stretch (low complexity) spans 139–177 (EAAAAAPQAAVEPEAVEAAPAPDAPEAAPEAEAAAPQPA).

This sequence belongs to the bacterial ribosomal protein bL17 family. In terms of assembly, part of the 50S ribosomal subunit. Contacts protein L32.

The polypeptide is Large ribosomal subunit protein bL17 (Mycobacterium avium (strain 104)).